A 404-amino-acid chain; its full sequence is MQDGSVTTPFGRRSMTLGMLASQYMSRELEPETSADKWKLFRALCEAKPKLGISERALSVMNALLSFYPETTLSEENGLIVFPSNMQLSLRAHGMAEATLRRHIAALVDAGLLARRDSPNGKRYARKDGDGSIDEAYGFSLAPLLSRAREIEQIAAYVKIERLQLRRLRERLTICRRDIGKLIEVAIEEGVDGNWDGIHQHYRSLVATIPRVATAATVAPILEEMEMLREEISNLLEIRLKIENLSGNPDQIERHKQNSHPESTNEFEPSSREEQGERPSPAIEPQREPMKVFPLGMVLRACPSISDYGPGGVVASPRDLMQAAVVVRSMLCVSPSAYQDACEVMGPENASAVMACILERSGHIKSPGGYLRDLTSRAKRGEFSPGPVLMALLRARGGSDRLAS.

A disordered region spans residues 249–287 (PDQIERHKQNSHPESTNEFEPSSREEQGERPSPAIEPQR).

This sequence to A.rhizogenes possible replication protein C (RepC).

The chain is Putative replication protein C from Sinorhizobium fredii (strain NBRC 101917 / NGR234).